The chain runs to 123 residues: Small ribosomal subunit protein uS12 (123 aa).

Asp-90 is modified (3-methylthioaspartic acid).

Belongs to the universal ribosomal protein uS12 family. In terms of assembly, part of the 30S ribosomal subunit. Contacts proteins S8 and S17. May interact with IF1 in the 30S initiation complex.

In terms of biological role, with S4 and S5 plays an important role in translational accuracy. Functionally, interacts with and stabilizes bases of the 16S rRNA that are involved in tRNA selection in the A site and with the mRNA backbone. Located at the interface of the 30S and 50S subunits, it traverses the body of the 30S subunit contacting proteins on the other side and probably holding the rRNA structure together. The combined cluster of proteins S8, S12 and S17 appears to hold together the shoulder and platform of the 30S subunit. The polypeptide is Small ribosomal subunit protein uS12 (Ehrlichia ruminantium (strain Gardel)).